Consider the following 157-residue polypeptide: Small ribosomal subunit protein uS7 (157 aa).

Belongs to the universal ribosomal protein uS7 family. As to quaternary structure, part of the 30S ribosomal subunit. Contacts proteins S9 and S11.

One of the primary rRNA binding proteins, it binds directly to 16S rRNA where it nucleates assembly of the head domain of the 30S subunit. Is located at the subunit interface close to the decoding center, probably blocks exit of the E-site tRNA. The sequence is that of Small ribosomal subunit protein uS7 from Bdellovibrio bacteriovorus (strain ATCC 15356 / DSM 50701 / NCIMB 9529 / HD100).